The chain runs to 216 residues: MLSVEELSCVRDERVLFDNLSFTISSGELIQIEGHNGAGKTTLLRIIAGLGRADSGQVCWKSEGIESAREDYYQDLLFLGHQTGVKRELTAYENLAFFQAMHNESIDQDMSGKPPVLGDESLWQALAQVGLAGREDVLAGQLSAGQQRRVALARLWISNHKLWILDEPLTAIDKQGVKVLESLFLSHVERGGIVLLTTHQDMFADSNHLRKIKLGQ.

An ABC transporter domain is found at 2–215; sequence LSVEELSCVR…SNHLRKIKLG (214 aa). 34–41 is an ATP binding site; the sequence is GHNGAGKT.

The protein belongs to the ABC transporter superfamily. CcmA exporter (TC 3.A.1.107) family. The complex is composed of two ATP-binding proteins (CcmA) and two transmembrane proteins (CcmB).

It localises to the cell inner membrane. It catalyses the reaction heme b(in) + ATP + H2O = heme b(out) + ADP + phosphate + H(+). Its function is as follows. Part of the ABC transporter complex CcmAB involved in the biogenesis of c-type cytochromes; once thought to export heme, this seems not to be the case, but its exact role is uncertain. Responsible for energy coupling to the transport system. This is Cytochrome c biogenesis ATP-binding export protein CcmA from Photobacterium profundum (strain SS9).